The sequence spans 243 residues: uncharacterized protein (243 aa).

Residues 26–204 form the VWFA domain; the sequence is RVGLVLDITG…ISDDELYDAL (179 aa). The tract at residues 222 to 243 is disordered; it reads REQEPPAEKPKKKGFFSRLFSK. Positions 231-243 are enriched in basic residues; that stretch reads PKKKGFFSRLFSK.

This is an uncharacterized protein from Bacillus subtilis (strain 168).